The following is a 464-amino-acid chain: ATP synthase subunit beta (464 aa).

Position 154 to 161 (154 to 161) interacts with ATP; sequence GGAGVGKT.

The protein belongs to the ATPase alpha/beta chains family. In terms of assembly, F-type ATPases have 2 components, CF(1) - the catalytic core - and CF(0) - the membrane proton channel. CF(1) has five subunits: alpha(3), beta(3), gamma(1), delta(1), epsilon(1). CF(0) has three main subunits: a(1), b(2) and c(9-12). The alpha and beta chains form an alternating ring which encloses part of the gamma chain. CF(1) is attached to CF(0) by a central stalk formed by the gamma and epsilon chains, while a peripheral stalk is formed by the delta and b chains.

Its subcellular location is the cell membrane. The enzyme catalyses ATP + H2O + 4 H(+)(in) = ADP + phosphate + 5 H(+)(out). In terms of biological role, produces ATP from ADP in the presence of a proton gradient across the membrane. The catalytic sites are hosted primarily by the beta subunits. The sequence is that of ATP synthase subunit beta from Mycoplasmopsis synoviae (strain 53) (Mycoplasma synoviae).